The chain runs to 439 residues: Ribosomal protein uS12 methylthiotransferase RimO (439 aa).

The MTTase N-terminal domain maps to Ser-2 to Asn-114. [4Fe-4S] cluster is bound by residues Cys-11, Cys-45, Cys-77, Cys-146, Cys-150, and Cys-153. Residues Thr-132 to Glu-363 form the Radical SAM core domain.

It belongs to the methylthiotransferase family. RimO subfamily. [4Fe-4S] cluster is required as a cofactor.

It localises to the cytoplasm. It carries out the reaction L-aspartate(89)-[ribosomal protein uS12]-hydrogen + (sulfur carrier)-SH + AH2 + 2 S-adenosyl-L-methionine = 3-methylsulfanyl-L-aspartate(89)-[ribosomal protein uS12]-hydrogen + (sulfur carrier)-H + 5'-deoxyadenosine + L-methionine + A + S-adenosyl-L-homocysteine + 2 H(+). Functionally, catalyzes the methylthiolation of an aspartic acid residue of ribosomal protein uS12. The chain is Ribosomal protein uS12 methylthiotransferase RimO from Campylobacter jejuni (strain RM1221).